The chain runs to 516 residues: NADH-quinone oxidoreductase subunit N (516 aa).

14 helical membrane passes run 12 to 32 (LLPAYLAAGTAVLVLLADLLV), 37 to 57 (VTISVAALGALATAAGAVLVG), 81 to 101 (LVAVLVALLTLGVLGLSGPLL), 108 to 128 (VGEYCFLLAASMTGGVALGAA), 131 to 151 (LITLIVALETLTLPLYVLVGL), 163 to 183 (VTFFVVSVVATTLTLLGAALL), 213 to 233 (VAVALVVVGLTVKVAAVPFHA), 246 to 266 (VAAYLSTVSKLGGVVALLAVV), 274 to 294 (ITGLVLALLAVLTMTVGNLVA), 303 to 323 (LLAWSSVAQAGYILAPLGALA), 341 to 361 (VAYTVFFVVLELAAFAAVVAL), 386 to 406 (VGLALALVGLAGLPPGLAGLF), 419 to 439 (GAAGLALVVAVNAVLGLAYYL), and 491 to 511 (VVLAAATVVALVVGFAPQLVL).

This sequence belongs to the complex I subunit 2 family. As to quaternary structure, NDH-1 is composed of 14 different subunits. Subunits NuoA, H, J, K, L, M, N constitute the membrane sector of the complex.

The protein resides in the cell membrane. It carries out the reaction a quinone + NADH + 5 H(+)(in) = a quinol + NAD(+) + 4 H(+)(out). NDH-1 shuttles electrons from NADH, via FMN and iron-sulfur (Fe-S) centers, to quinones in the respiratory chain. The immediate electron acceptor for the enzyme in this species is believed to be a menaquinone. Couples the redox reaction to proton translocation (for every two electrons transferred, four hydrogen ions are translocated across the cytoplasmic membrane), and thus conserves the redox energy in a proton gradient. This is NADH-quinone oxidoreductase subunit N from Salinispora tropica (strain ATCC BAA-916 / DSM 44818 / JCM 13857 / NBRC 105044 / CNB-440).